Consider the following 278-residue polypeptide: Large ribosomal subunit protein uL2 (278 aa).

Residues 223-278 form a disordered region; that stretch reads GVAMNPIDHPHGGGEGRTSGGRHPVTPWGFPTKGKKTRSNKRTDTFIVSSRHNRKK.

The protein belongs to the universal ribosomal protein uL2 family. Part of the 50S ribosomal subunit. Forms a bridge to the 30S subunit in the 70S ribosome.

Functionally, one of the primary rRNA binding proteins. Required for association of the 30S and 50S subunits to form the 70S ribosome, for tRNA binding and peptide bond formation. It has been suggested to have peptidyltransferase activity; this is somewhat controversial. Makes several contacts with the 16S rRNA in the 70S ribosome. The protein is Large ribosomal subunit protein uL2 of Methylobacterium nodulans (strain LMG 21967 / CNCM I-2342 / ORS 2060).